The sequence spans 280 residues: tRNase Z TRZ1 (280 aa).

The protein belongs to the RNase Z family. As to quaternary structure, homodimer. The cofactor is Zn(2+). It depends on Ca(2+) as a cofactor. Mn(2+) serves as cofactor. Requires Mg(2+) as cofactor.

It localises to the cytoplasm. It carries out the reaction Endonucleolytic cleavage of RNA, removing extra 3' nucleotides from tRNA precursor, generating 3' termini of tRNAs. A 3'-hydroxy group is left at the tRNA terminus and a 5'-phosphoryl group is left at the trailer molecule.. Zinc phosphodiesterase, which displays tRNA 3'-processing endonuclease activity. Involved in tRNA maturation, by removing a 3'-trailer from precursor tRNA. Can use bis-(p-nitophenyl) phosphate (bpNPP) as substrate. Involved in the processing of small nucleolar RNAs (snoRNAs). The protein is tRNase Z TRZ1 of Arabidopsis thaliana (Mouse-ear cress).